The following is a 613-amino-acid chain: V-type proton ATPase catalytic subunit A isoform 2 (613 aa).

Position 240-247 (240-247) interacts with ATP; it reads GAFGCGKT.

This sequence belongs to the ATPase alpha/beta chains family. V-ATPase is a heteromultimeric enzyme composed of a peripheral catalytic V1 complex (main components: subunits A, B, C, D, E, and F) attached to an integral membrane V0 proton pore complex (main component: the proteolipid protein).

It carries out the reaction ATP + H2O + 4 H(+)(in) = ADP + phosphate + 5 H(+)(out). In terms of biological role, catalytic subunit of the peripheral V1 complex of vacuolar ATPase. V-ATPase vacuolar ATPase is responsible for acidifying a variety of intracellular compartments in eukaryotic cells. In Acetabularia acetabulum (Mermaid's wine glass), this protein is V-type proton ATPase catalytic subunit A isoform 2.